The sequence spans 220 residues: MFCGSMIAICMRSKEGFLFNNKLMDWGLHYNPKIVKDNNIIGYHAPILDLDKKESIIILKNIIENIKGRDYLTIHLHNGKYGKINKETLIENLSIVNEFAEKNGIKLCIENLRKGFSSNPNNIIEIADEINCYITFDVGHIPYNRRLEFLEICSDRVYNSHVYEIEVDGKHLPPKNLNNLKPILDRLLDIKCKMFLIELMDIKEVLRTERMLKDYLEMYR.

This is an uncharacterized protein from Methanocaldococcus jannaschii (strain ATCC 43067 / DSM 2661 / JAL-1 / JCM 10045 / NBRC 100440) (Methanococcus jannaschii).